The sequence spans 712 residues: Polyribonucleotide nucleotidyltransferase (712 aa).

Mg(2+) contacts are provided by Asp487 and Asp493. The region spanning Pro554–Ile613 is the KH domain. The S1 motif domain occupies Gly623–Lys691.

This sequence belongs to the polyribonucleotide nucleotidyltransferase family. Mg(2+) is required as a cofactor.

It localises to the cytoplasm. It carries out the reaction RNA(n+1) + phosphate = RNA(n) + a ribonucleoside 5'-diphosphate. In terms of biological role, involved in mRNA degradation. Catalyzes the phosphorolysis of single-stranded polyribonucleotides processively in the 3'- to 5'-direction. The protein is Polyribonucleotide nucleotidyltransferase of Geobacillus sp. (strain WCH70).